The primary structure comprises 391 residues: tRNA-specific 2-thiouridylase MnmA (391 aa).

Residues 9-16 and Met-35 contribute to the ATP site; that span reads GMSGGVDS. Residues 95–97 form an interaction with target base in tRNA region; it reads NPD. The active-site Nucleophile is the Cys-100. Cys-100 and Cys-196 are oxidised to a cystine. Gly-124 contributes to the ATP binding site. Residues 146–148 form an interaction with tRNA region; that stretch reads KDQ. Cys-196 acts as the Cysteine persulfide intermediate in catalysis. The interaction with tRNA stretch occupies residues 308-309; it reads RY. Residues 372–382 are compositionally biased toward polar residues; sequence TGQPGQATSTG. The segment at 372–391 is disordered; it reads TGQPGQATSTGHAPALAEAR.

The protein belongs to the MnmA/TRMU family.

It is found in the cytoplasm. The catalysed reaction is S-sulfanyl-L-cysteinyl-[protein] + uridine(34) in tRNA + AH2 + ATP = 2-thiouridine(34) in tRNA + L-cysteinyl-[protein] + A + AMP + diphosphate + H(+). Functionally, catalyzes the 2-thiolation of uridine at the wobble position (U34) of tRNA, leading to the formation of s(2)U34. This Burkholderia cenocepacia (strain ATCC BAA-245 / DSM 16553 / LMG 16656 / NCTC 13227 / J2315 / CF5610) (Burkholderia cepacia (strain J2315)) protein is tRNA-specific 2-thiouridylase MnmA.